A 1176-amino-acid polypeptide reads, in one-letter code: Histidine kinase 2 (1176 aa).

Topologically, residues 1-29 (MSITCELLNLTSKKAKKSSSSDKKWLKKP) are cytoplasmic. A helical transmembrane segment spans residues 30–50 (LFFLILCGSLVIVLVMFLRLG). The Extracellular portion of the chain corresponds to 51–174 (RSQKEETDSC…LEQGLSSYLR (124 aa)). The chain crosses the membrane as a helical span at residues 175–195 (NAWWCLILGVLVCHKIYVSHS). The Cytoplasmic segment spans residues 196–232 (KARGERKEKVHLQEALAPKKQQQRAQTSSRGAGRWRK). Residues 233–253 (NILLLGILGGVSFSVWWFWDT) form a helical membrane-spanning segment. Over 254–536 (NEEIIMKRRE…CRFKHKLPIP (283 aa)) the chain is Extracellular. One can recognise a CHASE domain in the interval 302 to 526 (IPSAIDQRTF…GDPSRNHEMH (225 aa)). A helical membrane pass occupies residues 537-557 (WTAITPSILVLVITFLVGYIL). Over 558–1176 (YEAINRIATV…TAVARFFEPC (619 aa)) the chain is Cytoplasmic. Positions 594–867 (TVSHEIRTPM…TFSFTGVFGK (274 aa)) constitute a Histidine kinase domain. Position 597 is a phosphohistidine; by autocatalysis (H597). Response regulatory domains lie at 891 to 1013 (RALV…QETL) and 1036 to 1173 (QILV…ARFF). 2 positions are modified to 4-aspartylphosphate: D942 and D1086.

Self-interacts. Interacts with AHK3, AHP1, AHP2, AHP3, AHP5, ATAF2, AT2S3, BETAA-AD, CYP20-2, DRP1A, HIR1, HIR2, PI4KB1, PI4KG5 and At4g12060. Autophosphorylated predominantly on His residues. Activation probably requires a transfer of a phosphate group between a His in the transmitter domain and an Asp of the receiver domain. In terms of tissue distribution, expressed in roots, leaves and flowers, mostly in the vascular tissues. Present in seedlings.

It is found in the endoplasmic reticulum membrane. It catalyses the reaction ATP + protein L-histidine = ADP + protein N-phospho-L-histidine.. Activated by cytokinins to initiate phosphorelay signaling. Cytokinins (CK) receptor related to bacterial two-component regulators. Functions as a histidine kinase and transmits the stress signal to a downstream MAPK cascade. This protein undergoes an ATP-dependent autophosphorylation at a conserved histidine residue in the kinase core, and a phosphoryl group is then transferred to a conserved aspartate residue in the receiver domain. In the presence of cytokinin, feeds phosphate to phosphorelay-integrating histidine phosphotransfer protein (HPt) and activates subsequent cascade. Involved in meristems establishment in seedlings. Redundant negative regulator of drought and salt stress responses and abscisic acid (ABA) signaling. Together with AHK3, plays a negative regulatory role in cold stress signaling via inhibition of ABA response, occurring independently of the cold acclimation pathway. Redundant positive regulator of cytokinin signaling that regulates many developmental processes including seed germination, cell division, seed size, chlorophyll retention during leaf senescence, root repression and shoot promotion. Involved in alkamides (e.g. N-isobutyl decanamide) and N-acylethanolamides (NAE) signaling that control meristematic activity and differentiation processes during plant development. Contributes to vascular bundle formation and secondary growth in a cytokinin-dependent manner, probably by promoting the maintenance of mitotic activity and/or identity of procambial cells. Together with AHK4, required for growth and reproduction promotion stimulated by the endophytic fungus Piriformospora indica in a trans-zeatin-dependent manner. Required by the cytokinin-dependent flower development regulation pathway. This chain is Histidine kinase 2 (AHK2), found in Arabidopsis thaliana (Mouse-ear cress).